We begin with the raw amino-acid sequence, 462 residues long: Nuclear factor interleukin-3-regulated protein (462 aa).

Lys24 is covalently cross-linked (Glycyl lysine isopeptide (Lys-Gly) (interchain with G-Cter in SUMO2)). Positions 73–136 (DAMYWEKRRK…GLISSTAYAQ (64 aa)) constitute a bZIP domain. The interval 79–95 (KRRKNNEAAKRSREKRR) is basic motif. Positions 99–106 (LVLENKLI) are leucine-zipper. 2 disordered regions span residues 189-237 (DVSE…DDRG) and 258-302 (SPPL…IHSP). Over residues 201–210 (ESSVQGSCRS) the composition is skewed to polar residues. Residue Lys214 forms a Glycyl lysine isopeptide (Lys-Gly) (interchain with G-Cter in SUMO2) linkage. Lys219 participates in a covalent cross-link: Glycyl lysine isopeptide (Lys-Gly) (interchain with G-Cter in SUMO1); alternate. Residue Lys219 forms a Glycyl lysine isopeptide (Lys-Gly) (interchain with G-Cter in SUMO2); alternate linkage. Residues 227 to 237 (SYTREPRDDRG) show a composition bias toward basic and acidic residues. Residues 264–274 (VNRSSSNSPRT) are compositionally biased toward polar residues. The interval 299 to 363 (IHSPVELKHV…PIDMTSKRHF (65 aa)) is necessary for transcriptional repression and sufficient for interaction with DR1. Ser301 carries the phosphoserine modification. Residues Lys306, Lys314, Lys326, Lys332, Lys337, and Lys350 each participate in a glycyl lysine isopeptide (Lys-Gly) (interchain with G-Cter in SUMO2) cross-link. Ser353 carries the post-translational modification Phosphoserine. Glycyl lysine isopeptide (Lys-Gly) (interchain with G-Cter in SUMO2) cross-links involve residues Lys360, Lys394, Lys401, Lys406, Lys412, Lys419, Lys424, Lys434, and Lys448.

This sequence belongs to the bZIP family. NFIL3 subfamily. Homodimer. Binds DNA as a dimer. Interacts with DR1. Interacts with PER2 and CRY2. Interacts with NR0B2. Interacts with MYSM1. In terms of tissue distribution, expressed in bladder stomach, thyroid, spinal cord, lymph node, trachea, adrenal gland, bone marrow and muscle.

The protein localises to the nucleus. In terms of biological role, acts as a transcriptional regulator that recognizes and binds to the sequence 5'-[GA]TTA[CT]GTAA[CT]-3', a sequence present in many cellular and viral promoters. Represses transcription from promoters with activating transcription factor (ATF) sites. Represses promoter activity in osteoblasts. Represses transcriptional activity of PER1. Represses transcriptional activity of PER2 via the B-site on the promoter. Activates transcription from the interleukin-3 promoter in T-cells. Competes for the same consensus-binding site with PAR DNA-binding factors (DBP, HLF and TEF). Component of the circadian clock that acts as a negative regulator for the circadian expression of PER2 oscillation in the cell-autonomous core clock. Protects pro-B cells from programmed cell death. Represses the transcription of CYP2A5. Positively regulates the expression and activity of CES2 by antagonizing the repressive action of NR1D1 on CES2. Required for the development of natural killer cell precursors. This chain is Nuclear factor interleukin-3-regulated protein (NFIL3), found in Homo sapiens (Human).